The chain runs to 299 residues: Putative adenosine/adenine deaminase (299 aa).

Positions 16 and 18 each coordinate Zn(2+). Substrate is bound by residues His-18 and Gly-157. His-184 lines the Zn(2+) pocket. Glu-187 functions as the Proton donor in the catalytic mechanism. A Zn(2+)-binding site is contributed by Asp-265. Asp-266 is a substrate binding site.

Belongs to the metallo-dependent hydrolases superfamily. Adenosine and AMP deaminases family. It depends on Zn(2+) as a cofactor.

In terms of biological role, putative nucleoside deaminase. May catalyze the hydrolytic deamination of adenosine or some similar substrate and play a role in purine metabolism. In Treponema pallidum (strain Nichols), this protein is Putative adenosine/adenine deaminase.